A 456-amino-acid chain; its full sequence is Bifunctional protein GlmU (456 aa).

Residues 1 to 229 (MYKSAVILAA…PDEIKGVNSR (229 aa)) are pyrophosphorylase. UDP-N-acetyl-alpha-D-glucosamine contacts are provided by residues 8–11 (LAAG), Lys22, Gln73, and 78–79 (GT). Asp103 is a Mg(2+) binding site. Gly140, Glu155, Asn170, and Asn227 together coordinate UDP-N-acetyl-alpha-D-glucosamine. Asn227 provides a ligand contact to Mg(2+). Positions 230–250 (GQLAEAEEILRLRINERHMEN) are linker. The segment at 251-456 (GVTLIDPKNT…GWVAKKGLKK (206 aa)) is N-acetyltransferase. Residues Arg332 and Lys350 each coordinate UDP-N-acetyl-alpha-D-glucosamine. His362 functions as the Proton acceptor in the catalytic mechanism. The UDP-N-acetyl-alpha-D-glucosamine site is built by Tyr365 and Asn376. Acetyl-CoA contacts are provided by residues 385–386 (NY), Ala422, and Arg439.

The protein in the N-terminal section; belongs to the N-acetylglucosamine-1-phosphate uridyltransferase family. In the C-terminal section; belongs to the transferase hexapeptide repeat family. As to quaternary structure, homotrimer. Mg(2+) serves as cofactor.

The protein localises to the cytoplasm. It carries out the reaction alpha-D-glucosamine 1-phosphate + acetyl-CoA = N-acetyl-alpha-D-glucosamine 1-phosphate + CoA + H(+). The catalysed reaction is N-acetyl-alpha-D-glucosamine 1-phosphate + UTP + H(+) = UDP-N-acetyl-alpha-D-glucosamine + diphosphate. It functions in the pathway nucleotide-sugar biosynthesis; UDP-N-acetyl-alpha-D-glucosamine biosynthesis; N-acetyl-alpha-D-glucosamine 1-phosphate from alpha-D-glucosamine 6-phosphate (route II): step 2/2. The protein operates within nucleotide-sugar biosynthesis; UDP-N-acetyl-alpha-D-glucosamine biosynthesis; UDP-N-acetyl-alpha-D-glucosamine from N-acetyl-alpha-D-glucosamine 1-phosphate: step 1/1. Its pathway is bacterial outer membrane biogenesis; LPS lipid A biosynthesis. Catalyzes the last two sequential reactions in the de novo biosynthetic pathway for UDP-N-acetylglucosamine (UDP-GlcNAc). The C-terminal domain catalyzes the transfer of acetyl group from acetyl coenzyme A to glucosamine-1-phosphate (GlcN-1-P) to produce N-acetylglucosamine-1-phosphate (GlcNAc-1-P), which is converted into UDP-GlcNAc by the transfer of uridine 5-monophosphate (from uridine 5-triphosphate), a reaction catalyzed by the N-terminal domain. The sequence is that of Bifunctional protein GlmU from Clostridium novyi (strain NT).